The sequence spans 238 residues: Nucleoside diphosphate kinase III, chloroplastic/mitochondrial (238 aa).

The transit peptide at methionine 1–alanine 85 directs the protein to the chloroplast and mitochondrion. Positions 96, 144, 172, 178, 189, and 199 each coordinate ATP. Catalysis depends on histidine 202, which acts as the Pros-phosphohistidine intermediate.

Belongs to the NDK family. In terms of assembly, homohexamer. It depends on Mg(2+) as a cofactor.

The protein localises to the plastid. Its subcellular location is the chloroplast thylakoid lumen. The protein resides in the mitochondrion intermembrane space. It catalyses the reaction a 2'-deoxyribonucleoside 5'-diphosphate + ATP = a 2'-deoxyribonucleoside 5'-triphosphate + ADP. It carries out the reaction a ribonucleoside 5'-diphosphate + ATP = a ribonucleoside 5'-triphosphate + ADP. Its function is as follows. Major role in the synthesis of nucleoside triphosphates other than ATP. The ATP gamma phosphate is transferred to the NDP beta phosphate via a ping-pong mechanism, using a phosphorylated active-site intermediate. Shows the highest specificity towards GDP. The protein is Nucleoside diphosphate kinase III, chloroplastic/mitochondrial (NDPK3) of Arabidopsis thaliana (Mouse-ear cress).